The following is a 127-amino-acid chain: Large ribosomal subunit protein bL12 (127 aa).

It belongs to the bacterial ribosomal protein bL12 family. As to quaternary structure, homodimer. Part of the ribosomal stalk of the 50S ribosomal subunit. Forms a multimeric L10(L12)X complex, where L10 forms an elongated spine to which 2 to 4 L12 dimers bind in a sequential fashion. Binds GTP-bound translation factors.

Functionally, forms part of the ribosomal stalk which helps the ribosome interact with GTP-bound translation factors. Is thus essential for accurate translation. The chain is Large ribosomal subunit protein bL12 from Pelobacter propionicus (strain DSM 2379 / NBRC 103807 / OttBd1).